The sequence spans 638 residues: Sodium- and chloride-dependent glycine transporter 1 (638 aa).

Residues 1 to 29 (MAAAQGPVAPSSLEQNGAVPSEATKKDQN) form a disordered region. The Cytoplasmic segment spans residues 1-40 (MAAAQGPVAPSSLEQNGAVPSEATKKDQNLKRGNWGNQIE). 3 consecutive transmembrane segments (helical) span residues 41-61 (FVLT…FPYL), 69-88 (AFMF…LFFM), and 112-132 (GVGY…NVVI). Topologically, residues 133 to 219 (CIAFYYFFSS…DDIGNFGEVR (87 aa)) are extracellular. N169, N172, N182, and N188 each carry an N-linked (GlcNAc...) asparagine glycan. 9 helical membrane passes run 220–238 (LPLL…LCLI), 247–264 (VVYF…ILFI), 300–317 (IFYS…MASY), 329–350 (VIIS…FSIL), 383–402 (LPIS…LLGL), 431–449 (YVTL…PLTS), 465–485 (SFSL…IYGH), 506–525 (ICWR…FSVI), and 544–562 (IGFL…YALF). Topologically, residues 563 to 638 (QFCRTDGDTL…GSSRFQDSRI (76 aa)) are cytoplasmic. Positions 597-638 (RYAPTTTPSPEDGLEVQPLHPDKAQIPMVGSNGSSRFQDSRI) are disordered. Position 603 is a phosphothreonine (T603). Residues S605 and S630 each carry the phosphoserine modification. The interval 627-638 (SNGSSRFQDSRI) is essential for interaction with EXOC1. The segment covering 627–638 (SNGSSRFQDSRI) has biased composition (polar residues).

The protein belongs to the sodium:neurotransmitter symporter (SNF) (TC 2.A.22) family. SLC6A9 subfamily. Interacts with EXOC1; interaction increases the transporter capacity of SLC6A9 probably by promoting its insertion into the cell membrane. Interacts with EXOC3 and EXOC4.

The protein localises to the cell membrane. The enzyme catalyses glycine(out) + chloride(out) + 2 Na(+)(out) = glycine(in) + chloride(in) + 2 Na(+)(in). Functionally, sodium- and chloride-dependent glycine transporter which is essential for regulating glycine concentrations at inhibitory glycinergic synapses. In Bos taurus (Bovine), this protein is Sodium- and chloride-dependent glycine transporter 1 (SLC6A9).